The sequence spans 268 residues: MMQRCLRLQKPLALRRGLHLAQVNSQAVATEAPEAEPLDAFERQYLKERIEISPFQRLFLGTGSSIAALLNPRRHDMIACLGETTGEDALWTILDTMQASEEGQRIMADKPRIHTSTIDFKYLETLPPDTFGAAYVKFLKDNQVTPDSRMAVRFLEDPKLAYLMTRYRECHDLIHTVLDMPTNMLGEVAVKWVEALNTGLPMCYGGAVFGAVRLRPKQRRAYLKHYLPWALENGKRAKPLMPVYWEKRWEQNIHELRSELGITVLNKA.

The N-terminal 25 residues, 1 to 25 (MMQRCLRLQKPLALRRGLHLAQVNS), are a transit peptide targeting the mitochondrion. 4 residues coordinate Zn(2+): histidine 171, aspartate 172, histidine 175, and glutamate 187.

Belongs to the COQ4 family. As to quaternary structure, component of a multi-subunit COQ enzyme complex. It depends on Zn(2+) as a cofactor.

The protein resides in the mitochondrion inner membrane. It carries out the reaction a 4-hydroxy-3-methoxy-5-(all-trans-polyprenyl)benzoate + H(+) = a 2-methoxy-6-(all-trans-polyprenyl)phenol + CO2. It functions in the pathway cofactor biosynthesis; ubiquinone biosynthesis. Functionally, lyase that catalyzes the C1-decarboxylation of 4-hydroxy-3-methoxy-5-(all-trans-polyprenyl)benzoic acid into 2-methoxy-6-(all-trans-polyprenyl)phenol during ubiquinone biosynthesis. This Drosophila simulans (Fruit fly) protein is Ubiquinone biosynthesis protein COQ4 homolog, mitochondrial.